Consider the following 601-residue polypeptide: Protein nubbin (601 aa).

Over residues 1 to 25 (MVMSELRWHTASPEDNKNSLKRDLL) the composition is skewed to basic and acidic residues. Disordered regions lie at residues 1 to 32 (MVMS…PTSA), 49 to 94 (SRSP…AKRQ), 121 to 158 (KQEE…ATAS), 351 to 425 (PASS…ETTD), and 581 to 601 (INPS…YMMH). Residues 49–68 (SRSPSPLQSNASDCDDNNSS) show a composition bias toward low complexity. Positions 135–157 (NLTSDNSRHSTQSPSNSVKSATA) are enriched in polar residues. Residues 384–415 (TPSTPTSGTQMSQGTTTPQPKTVASAAAARAA) are compositionally biased toward low complexity. In terms of domain architecture, POU-specific spans 421-495 (EETTDLEELE…LLQKWLDDAD (75 aa)). Residues 523-582 (RRKKRTSIETTIRGALEKAFLANQKPTSEEITQLADRLSMEKEVVRVWFCNRRQKEKRIN) constitute a DNA-binding region (homeobox). Residues 591–601 (ADDDESSYMMH) show a composition bias toward acidic residues.

Belongs to the POU transcription factor family. Class-2 subfamily. Initial expression in cellular blastoderm stage, then in ectodermal stripes during germband extension. Broad expression in the neuroectoderm followed by limitation to discrete subsets of CNS cells, and expression in specific PNS neurons and support cells.

The protein resides in the nucleus. Functionally, DNA-binding regulatory protein implicated in early development. Involved in neuronal cell fate decision. Repressed directly or indirectly by the BX-C homeotic proteins. The chain is Protein nubbin (nub) from Drosophila melanogaster (Fruit fly).